We begin with the raw amino-acid sequence, 188 residues long: Elongation factor P (188 aa).

Belongs to the elongation factor P family.

It localises to the cytoplasm. Its pathway is protein biosynthesis; polypeptide chain elongation. Functionally, involved in peptide bond synthesis. Stimulates efficient translation and peptide-bond synthesis on native or reconstituted 70S ribosomes in vitro. Probably functions indirectly by altering the affinity of the ribosome for aminoacyl-tRNA, thus increasing their reactivity as acceptors for peptidyl transferase. The sequence is that of Elongation factor P from Methylorubrum extorquens (strain CM4 / NCIMB 13688) (Methylobacterium extorquens).